A 342-amino-acid chain; its full sequence is Uroporphyrinogen decarboxylase (342 aa).

Residues 26-30 (RQAGR), D76, Y150, S205, and H321 contribute to the substrate site.

This sequence belongs to the uroporphyrinogen decarboxylase family. Homodimer.

The protein resides in the cytoplasm. It catalyses the reaction uroporphyrinogen III + 4 H(+) = coproporphyrinogen III + 4 CO2. It functions in the pathway porphyrin-containing compound metabolism; protoporphyrin-IX biosynthesis; coproporphyrinogen-III from 5-aminolevulinate: step 4/4. Its function is as follows. Catalyzes the decarboxylation of four acetate groups of uroporphyrinogen-III to yield coproporphyrinogen-III. This is Uroporphyrinogen decarboxylase from Sphingopyxis alaskensis (strain DSM 13593 / LMG 18877 / RB2256) (Sphingomonas alaskensis).